A 335-amino-acid chain; its full sequence is Acetyl-coenzyme A carboxylase carboxyl transferase subunit alpha (335 aa).

The 261-residue stretch at 48–308 (TLEKKVEALR…KGILIEELSA (261 aa)) folds into the CoA carboxyltransferase C-terminal domain.

Belongs to the AccA family. In terms of assembly, acetyl-CoA carboxylase is a heterohexamer composed of biotin carboxyl carrier protein (AccB), biotin carboxylase (AccC) and two subunits each of ACCase subunit alpha (AccA) and ACCase subunit beta (AccD).

Its subcellular location is the cytoplasm. The enzyme catalyses N(6)-carboxybiotinyl-L-lysyl-[protein] + acetyl-CoA = N(6)-biotinyl-L-lysyl-[protein] + malonyl-CoA. Its pathway is lipid metabolism; malonyl-CoA biosynthesis; malonyl-CoA from acetyl-CoA: step 1/1. In terms of biological role, component of the acetyl coenzyme A carboxylase (ACC) complex. First, biotin carboxylase catalyzes the carboxylation of biotin on its carrier protein (BCCP) and then the CO(2) group is transferred by the carboxyltransferase to acetyl-CoA to form malonyl-CoA. The polypeptide is Acetyl-coenzyme A carboxylase carboxyl transferase subunit alpha (Chlorobium phaeovibrioides (strain DSM 265 / 1930) (Prosthecochloris vibrioformis (strain DSM 265))).